Here is a 256-residue protein sequence, read N- to C-terminus: MQFTPPFEQGVLLRRYKRFLTDIRLSDGSEVTIHCPNTGSMKNCLFPGEKVWFSTSDNPKRKYSRTWEQAESDVGHIIGINTGRANQLAEDAIKAGVITELSGYHSLKREVKYGSENSRIDILLSDDTGSTDTSFSGTPPTNTEPANTKAKPNCYVEVKSCTLLEEGQGYFPDAVTTRGQKHLRELMEMVESGHRGVLLFVVQHTGIDSVQAAAHIDPDYASLLTKAHSAGVEVIAYSAEMSPKGASLLKSCPVKL.

Residues 128–141 (TGSTDTSFSGTPPT) show a composition bias toward low complexity. The segment at 128–149 (TGSTDTSFSGTPPTNTEPANTK) is disordered.

It belongs to the SfsA family.

This is Sugar fermentation stimulation protein homolog from Shewanella sediminis (strain HAW-EB3).